We begin with the raw amino-acid sequence, 417 residues long: Magnesium-protoporphyrin IX monomethyl ester [oxidative] cyclase, chloroplastic (417 aa).

The N-terminal 45 residues, 1–45, are a transit peptide targeting the chloroplast; it reads MASAMELSLLNPAMHHYGIAAKTASHLPVVPARRASSGAVRFRVR.

Belongs to the AcsF family. Fe cation serves as cofactor.

It is found in the plastid. The protein localises to the chloroplast membrane. The enzyme catalyses Mg-protoporphyrin IX 13-monomethyl ester + 3 NADPH + 3 O2 + 2 H(+) = 3,8-divinyl protochlorophyllide a + 3 NADP(+) + 5 H2O. The protein operates within porphyrin-containing compound metabolism; chlorophyll biosynthesis. Functionally, catalyzes the formation of the isocyclic ring in chlorophyll biosynthesis. Mediates the cyclase reaction, which results in the formation of divinylprotochlorophyllide (Pchlide) characteristic of all chlorophylls from magnesium-protoporphyrin IX 13-monomethyl ester (MgPMME). In Hordeum vulgare (Barley), this protein is Magnesium-protoporphyrin IX monomethyl ester [oxidative] cyclase, chloroplastic (CRD1).